Consider the following 316-residue polypeptide: 4-hydroxy-3-methylbut-2-enyl diphosphate reductase (316 aa).

[4Fe-4S] cluster is bound at residue Cys12. (2E)-4-hydroxy-3-methylbut-2-enyl diphosphate contacts are provided by His41 and His74. Dimethylallyl diphosphate-binding residues include His41 and His74. Isopentenyl diphosphate contacts are provided by His41 and His74. Cys96 contacts [4Fe-4S] cluster. Residue His124 participates in (2E)-4-hydroxy-3-methylbut-2-enyl diphosphate binding. His124 is a dimethylallyl diphosphate binding site. His124 contributes to the isopentenyl diphosphate binding site. Glu126 acts as the Proton donor in catalysis. (2E)-4-hydroxy-3-methylbut-2-enyl diphosphate is bound at residue Thr169. Cys199 serves as a coordination point for [4Fe-4S] cluster. (2E)-4-hydroxy-3-methylbut-2-enyl diphosphate contacts are provided by Ser227, Ser228, Asn229, and Ser271. Dimethylallyl diphosphate is bound by residues Ser227, Ser228, Asn229, and Ser271. Residues Ser227, Ser228, Asn229, and Ser271 each contribute to the isopentenyl diphosphate site.

This sequence belongs to the IspH family. Requires [4Fe-4S] cluster as cofactor.

The enzyme catalyses isopentenyl diphosphate + 2 oxidized [2Fe-2S]-[ferredoxin] + H2O = (2E)-4-hydroxy-3-methylbut-2-enyl diphosphate + 2 reduced [2Fe-2S]-[ferredoxin] + 2 H(+). It catalyses the reaction dimethylallyl diphosphate + 2 oxidized [2Fe-2S]-[ferredoxin] + H2O = (2E)-4-hydroxy-3-methylbut-2-enyl diphosphate + 2 reduced [2Fe-2S]-[ferredoxin] + 2 H(+). It functions in the pathway isoprenoid biosynthesis; dimethylallyl diphosphate biosynthesis; dimethylallyl diphosphate from (2E)-4-hydroxy-3-methylbutenyl diphosphate: step 1/1. It participates in isoprenoid biosynthesis; isopentenyl diphosphate biosynthesis via DXP pathway; isopentenyl diphosphate from 1-deoxy-D-xylulose 5-phosphate: step 6/6. In terms of biological role, catalyzes the conversion of 1-hydroxy-2-methyl-2-(E)-butenyl 4-diphosphate (HMBPP) into a mixture of isopentenyl diphosphate (IPP) and dimethylallyl diphosphate (DMAPP). Acts in the terminal step of the DOXP/MEP pathway for isoprenoid precursor biosynthesis. This Xanthomonas oryzae pv. oryzae (strain MAFF 311018) protein is 4-hydroxy-3-methylbut-2-enyl diphosphate reductase.